Consider the following 170-residue polypeptide: Disulfide bond formation protein B 1 (170 aa).

Over M1–L14 the chain is Cytoplasmic. The chain crosses the membrane as a helical span at residues L15 to Y31. Over L32–Y49 the chain is Periplasmic. C41 and C44 are joined by a disulfide. A helical membrane pass occupies residues F50–I64. Residues R65 to W71 are Cytoplasmic-facing. The chain crosses the membrane as a helical span at residues V72–A89. Residues R90 to G144 lie on the Periplasmic side of the membrane. An intrachain disulfide couples C102 to C130. A helical membrane pass occupies residues W145 to R163. The Cytoplasmic portion of the chain corresponds to H164–G170.

The protein belongs to the DsbB family.

It is found in the cell inner membrane. Required for disulfide bond formation in some periplasmic proteins. Acts by oxidizing the DsbA protein. This Burkholderia lata (strain ATCC 17760 / DSM 23089 / LMG 22485 / NCIMB 9086 / R18194 / 383) protein is Disulfide bond formation protein B 1.